The following is a 148-amino-acid chain: Calmodulin-4 (148 aa).

4 consecutive EF-hand domains span residues 8-43 (EEVA…LGKN), 44-79 (LPEK…YKKG), 80-115 (HRAG…LGES), and 116-148 (LSQE…HVEN). Ca(2+) is bound by residues D21, N23, D25, H27, E32, D57, D59, D61, K63, E68, D93, N95, D97, Y99, and E104.

Its function is as follows. Implicated in the early stage of ectopic ossification. In Mus musculus (Mouse), this protein is Calmodulin-4 (Calm4).